We begin with the raw amino-acid sequence, 195 residues long: MRELEERILKDGRVLPGEVLKVDGFLNHQVDPDLMFAMGTEFAHLFQDAGVTKILTVESSGIAPAVMAGLAMHVPVVFARKHKSVTLIDDLYTAEVYSYTKKTSNHISIAKKFLQADDQVLLIDDFLANGQAVQGMFEICDKAHVKIAGVGIVIEKVFQTGHQLIADRGVRLESLAQITSFDGDRVHFASEDTQA.

Xanthine-binding residues include Leu20 and Asn27. 5-phospho-alpha-D-ribose 1-diphosphate is bound at residue 128–132 (ANGQA). Residue Lys156 coordinates xanthine.

This sequence belongs to the purine/pyrimidine phosphoribosyltransferase family. Xpt subfamily. Homodimer.

The protein localises to the cytoplasm. The enzyme catalyses XMP + diphosphate = xanthine + 5-phospho-alpha-D-ribose 1-diphosphate. It participates in purine metabolism; XMP biosynthesis via salvage pathway; XMP from xanthine: step 1/1. Converts the preformed base xanthine, a product of nucleic acid breakdown, to xanthosine 5'-monophosphate (XMP), so it can be reused for RNA or DNA synthesis. This is Xanthine phosphoribosyltransferase from Lactiplantibacillus plantarum (strain ATCC BAA-793 / NCIMB 8826 / WCFS1) (Lactobacillus plantarum).